Consider the following 1011-residue polypeptide: Cell division cycle-associated protein 2 (1011 aa).

The segment covering 1–22 (MDTCSQESEPLQTKESPINNAG) has biased composition (polar residues). The disordered stretch occupies residues 1–26 (MDTCSQESEPLQTKESPINNAGKTPL). Residues S125, S130, S209, S293, and S310 each carry the phosphoserine modification. Residue T313 is modified to Phosphothreonine. A PP1-binding domain is found at 380–440 (KRKRVTFGED…PEWLPQPNFD (61 aa)). S391 and S398 each carry phosphoserine. Disordered regions lie at residues 395–438 (LDES…PQPN) and 522–544 (PCKE…KVLP). T403 is subject to Phosphothreonine. Residues 418-431 (SSLSPPLLEQSPVP) are compositionally biased toward low complexity. A Phosphoserine modification is found at S428. Over residues 522 to 543 (PCKEKKTNRRKSQESKHADKVL) the composition is skewed to basic and acidic residues. S583, S702, and S747 each carry phosphoserine. Residue K753 forms a Glycyl lysine isopeptide (Lys-Gly) (interchain with G-Cter in SUMO2) linkage. Residues 790–803 (DQRKVSKSQGEDLG) are compositionally biased toward basic and acidic residues. 2 disordered regions span residues 790-835 (DQRK…GLHL) and 896-1011 (GLVW…LSEN). Residues 931-945 (SSRQDPCTLPSTSSE) are compositionally biased toward polar residues. Position 967 is a phosphoserine (S967). Residues 968–983 (FCTSTLANPKSTTQSR) are compositionally biased toward polar residues. The segment covering 993–1011 (QKRENTLQETSRESDLSEN) has biased composition (basic and acidic residues).

Interacts with PPP1CC. Phosphorylated by CDK1. May regulate its subcellular location.

It localises to the nucleus. In terms of biological role, regulator of chromosome structure during mitosis required for condensin-depleted chromosomes to retain their compact architecture through anaphase. Acts by mediating the recruitment of phopsphatase PP1-gamma subunit (PPP1CC) to chromatin at anaphase and into the following interphase. At anaphase onset, its association with chromatin targets a pool of PPP1CC to dephosphorylate substrates. This Bos taurus (Bovine) protein is Cell division cycle-associated protein 2 (CDCA2).